A 496-amino-acid chain; its full sequence is Acetyltransferase adrJ (496 aa).

Active-site proton acceptor residues include His-174 and Asp-421.

This sequence belongs to the plant acyltransferase family. In terms of assembly, monomer.

The protein operates within secondary metabolite biosynthesis; terpenoid biosynthesis. Its function is as follows. Acetyltransferase; part of the gene cluster that mediates the biosynthesis of andrastins, meroterpenoid compounds that exhibit inhibitory activity against ras farnesyltransferase, suggesting that they could be promising leads for antitumor agents. The first step of the pathway is the synthesis of 3,5-dimethylorsellinic acid (DMOA) by the polyketide synthase adrD via condensation of one acetyl-CoA starter unit with 3 malonyl-CoA units and 2 methylations. DMAO is then converted to farnesyl-DMAO by the prenyltransferase adrG. The methyltransferase adrK catalyzes the methylation of the carboxyl group of farnesyl-DMAO to farnesyl-DMAO methyl ester which is further converted to epoxyfarnesyl-DMAO methyl ester by the FAD-dependent monooxygenase adrH. The terpene cyclase adrI then catalyzes the carbon skeletal rearrangement to generate the andrastin E, the first compound in the pathway having the andrastin scaffold, with the tetracyclic ring system. The post-cyclization tailoring enzymes adrF, adrE, adrJ, and adrA, are involved in the conversion of andrastin E into andrastin A. The short chain dehydrogenase adrF is responsible for the oxidation of the C-3 a hydroxyl group of andrastin E to yield the corresponding ketone, andrastin D. The ketoreductase adrE stereoselectively reduces the carbonyl moiety to reverse the stereochemistry of the C-3 position to yield andrastin F. The acetyltransferase adrJ is the acetyltransferase that attaches the acetyl group to the C-3 hydroxyl group of andrastin F to yield andrastin C. Finally, the cytochrome P450 monooxygenase adrA catalyzes two sequential oxidation reactions of the C-23 methyl group, to generate the corresponding alcohol andrastin B, and aldehyde andrastin A. The sequence is that of Acetyltransferase adrJ from Penicillium roqueforti.